We begin with the raw amino-acid sequence, 310 residues long: Putative S-adenosyl-L-methionine-dependent methyltransferase MAB_4587c (310 aa).

S-adenosyl-L-methionine-binding positions include Asp-126 and 155-156; that span reads DL.

The protein belongs to the UPF0677 family.

Functionally, exhibits S-adenosyl-L-methionine-dependent methyltransferase activity. The polypeptide is Putative S-adenosyl-L-methionine-dependent methyltransferase MAB_4587c (Mycobacteroides abscessus (strain ATCC 19977 / DSM 44196 / CCUG 20993 / CIP 104536 / JCM 13569 / NCTC 13031 / TMC 1543 / L948) (Mycobacterium abscessus)).